The following is a 647-amino-acid chain: MFSLRALSGVVTRSLVRAPHRRTMSHAARLLPHRVPQKKGPERDPSTLSNYEHFKPTNTTVCLKVDWTDQKLAGSVTYDLTVENSPKNLVLDTSYLDIQEVQVNGHKADFSIGERHNIFGSPLTITLPPNSGDKLQVKIAYSTTPSCTALQWLTPEQTAGKKAPYFFSQCQAIHARSVMPAFDTPSVKSTFDIEIESDHPVVASGLPIKSSNDTGKFVFRQKVPIPAYLFALAGGDLDSAPIGPRSDVYSEPCDLHKCQYEFEADTEKFINAAENIVFPYEWEKYDVLVLPPSFPYGGMENPNITFATPTLVSGDRQNVDVIAHELAHSWSGNLVTNCSWEHFWLNEGWTVYLERRIVGALEGEQQRHFSAIIGWNALEESVKLMSRDPVQESYTQLVVDLKPNGGADPDDAFSSVPYEKGSTFLFFLETEIGQAKFDPFVKHYFKHFRYKSLDTYQFIDCLFDFYANDKEVTDKLNAIDWEKTLFAPGLPNKPKFDTTLADECYSLASRWKDASDASAFSAKDIASFNSSQMVVFLITLSEYEGKDGFSWANKKELISNMGDIYSLANSSNPEVIAKWYSIAILAKVESEYPKLADWLATVGRMKFVRPGYRALNSVDPKLAKETFEKNKDFYHPICRDMVSKDLQ.

Residues 169–171 and 295–300 each bind substrate; these read QCQ and PYGGME. Histidine 324 lines the Zn(2+) pocket. The Proton acceptor role is filled by glutamate 325. Zn(2+) contacts are provided by histidine 328 and glutamate 347. Catalysis depends on tyrosine 418, which acts as the Proton donor.

This sequence belongs to the peptidase M1 family. Zn(2+) serves as cofactor.

It is found in the cytoplasm. Its subcellular location is the nucleus. The enzyme catalyses an epoxide + H2O = an ethanediol. Functionally, aminopeptidase that preferentially cleaves di- and tripeptides. Also has low epoxide hydrolase activity (in vitro). Can hydrolyze the epoxide leukotriene LTA(4) but it forms preferentially 5,6-dihydroxy-7,9,11,14-eicosatetraenoic acid rather than the cytokine leukotriene B(4) as the product compared to the homologous mammalian enzyme (in vitro). In Yarrowia lipolytica (strain CLIB 122 / E 150) (Yeast), this protein is Leucine aminopeptidase 2.